We begin with the raw amino-acid sequence, 135 residues long: Small ribosomal subunit protein uS9 (135 aa).

A compositionally biased stretch (basic and acidic residues) spans 107-118 (LVGDPRRTEPHK). Residues 107-135 (LVGDPRRTEPHKPNRSTKGPRAKRQKSYR) form a disordered region. A compositionally biased stretch (basic residues) spans 119–135 (PNRSTKGPRAKRQKSYR).

This sequence belongs to the universal ribosomal protein uS9 family. As to quaternary structure, part of the 30S ribosomal subunit.

The chain is Small ribosomal subunit protein uS9 from Pyrococcus furiosus (strain ATCC 43587 / DSM 3638 / JCM 8422 / Vc1).